A 556-amino-acid chain; its full sequence is Outer spore wall assembly protein SHE10 (556 aa).

A signal peptide spans 1–21 (MRFLTKFLLFLATVYFGLKYA). Residues 135–201 (NKNLKRHVER…KQITSDVKKT (67 aa)) adopt a coiled-coil conformation. A compositionally biased stretch (basic and acidic residues) spans 190–208 (EAKQITSDVKKTVESEIKK). 2 disordered regions span residues 190 to 263 (EAKQ…EDIT) and 534 to 556 (RKEA…PISA). Residues 220–244 (IVSTSTIVKTITRTRHSSSSTTSTK) show a composition bias toward low complexity. Residues 245–256 (SAEETSEKNLET) show a composition bias toward basic and acidic residues. Residues 481–547 (KISEFKLLLD…GEVNESSEEE (67 aa)) are a coiled coil.

This sequence belongs to the SHE10 family. As to quaternary structure, component of the mitochondria-localized RNase mitochondrial RNA-processing (RNase MRP) composed of one single RNA encoded by the NME1 gene and at least 31 proteins. Absent in the nucleus-localized RNase MRP (NuMRP).

It localises to the mitochondrion. Its function is as follows. Involved in spore wall assembly. May be a component of the mitochondrial RNase MRP (MtMRP), a ribonucleoprotein endoribonuclease involved in the cleaving RNA transcripts to generate primers for DNA replication in mitochondria. The sequence is that of Outer spore wall assembly protein SHE10 from Candida glabrata (strain ATCC 2001 / BCRC 20586 / JCM 3761 / NBRC 0622 / NRRL Y-65 / CBS 138) (Yeast).